An 87-amino-acid chain; its full sequence is Kappa 1b-bungarotoxin (87 aa).

The signal sequence occupies residues 1–21 (MKTLLLTLVVVTIVCLDLGYT). Disulfide bonds link C24–C42, C35–C63, C48–C52, C67–C79, and C80–C85.

This sequence belongs to the three-finger toxin family. Long-chain subfamily. Kappa-neurotoxin sub-subfamily. As to quaternary structure, homo- and heterodimer; non-covalently linked. In terms of tissue distribution, expressed by the venom gland.

It is found in the secreted. Postsynaptic neurotoxin that binds and inhibits neuronal nicotinic acetylcholine receptors (nAChR) with high affinity (IC(50)&lt;100 nM). Is a selective, and slowly reversible antagonist of alpha-3/CHRNA3-containing and some alpha-4/CHRNA4-containing AChRs. This chain is Kappa 1b-bungarotoxin, found in Bungarus candidus (Malayan krait).